Consider the following 377-residue polypeptide: MSNTKDNFNVADLTAALNAGDRADLVNVLKNKLHDLTGKHSNVTESLSPNVRKRVEALREIQTEHDELEAKFFEERAALEAKYQKLYQPLYTKRFEIVNGVVEVDGATTEAAAADKQEDKDAVEKGVPDFWLTAMKNNEVLAEEITERDEEALKFLRDIKWSRIDDPKGFKLDFFFETNPYFKNSVLTKTYHMIDEDEPILEKAIATEIEWYPGKCLTQKILKKKPKKGSKNAKPITKTEQCESFFNFFSPPQVPEDEEDIDEDAAEELQNLMEQDYDIGSTIRDKIIPHAVSWFTGEAAEDDYAELEDDEDEDDDEEDDEDEDEEEEDEEDDEDEEEDEDETKTKKKTSAVPKKSGRVPAAADGQSGERPPECKQQ.

Positions 26 to 80 form a coiled coil; sequence VNVLKNKLHDLTGKHSNVTESLSPNVRKRVEALREIQTEHDELEAKFFEERAALE. A Nuclear export signal motif is present at residues 47 to 62; the sequence is LSPNVRKRVEALREIQ. The short motif at 223–228 is the Nuclear localization signal element; it reads KKKPKK. Residues 298 to 377 form a disordered region; it reads EAAEDDYAEL…GERPPECKQQ (80 aa). The segment covering 299–342 has biased composition (acidic residues); it reads AAEDDYAELEDDEDEDDDEEDDEDEDEEEEDEEDDEDEEEDEDE. Cys-374 carries the post-translational modification Cysteine methyl ester. The S-farnesyl cysteine moiety is linked to residue Cys-374. The propeptide at 375–377 is removed in mature form; the sequence is KQQ.

This sequence belongs to the nucleosome assembly protein (NAP) family. As to quaternary structure, binds preferentially histone H1 in vitro. Interacts with CYCB1;1.

The protein localises to the nucleus. It localises to the cytoplasm. Functionally, may modulate chromatin structure by regulation of nucleosome assembly/disassembly. Could function together with B-type cyclins in the regulation of microtubule dynamics. This chain is Nucleosome assembly protein 1;2 (NAP1;2), found in Nicotiana tabacum (Common tobacco).